A 344-amino-acid polypeptide reads, in one-letter code: Oxygen sensor histidine kinase NreB (344 aa).

4 residues coordinate [4Fe-4S] cluster: Cys58, Cys61, Cys73, and Cys76. Residues 147–344 (ENERKRISRE…GTIITLDIPI (198 aa)) form the Histidine kinase domain. His158 is subject to Phosphohistidine; by autocatalysis.

[4Fe-4S] cluster serves as cofactor. Autophosphorylated.

The protein resides in the cytoplasm. The enzyme catalyses ATP + protein L-histidine = ADP + protein N-phospho-L-histidine.. Its function is as follows. Member of the two-component regulatory system NreB/NreC involved in the control of dissimilatory nitrate/nitrite reduction in response to oxygen. NreB functions as a direct oxygen sensor histidine kinase which is autophosphorylated, in the absence of oxygen, probably at the conserved histidine residue, and transfers its phosphate group probably to a conserved aspartate residue of NreC. NreB/NreC activates the expression of the nitrate (narGHJI) and nitrite (nir) reductase operons, as well as the putative nitrate transporter gene narT. The sequence is that of Oxygen sensor histidine kinase NreB (nreB) from Staphylococcus epidermidis (strain ATCC 35984 / DSM 28319 / BCRC 17069 / CCUG 31568 / BM 3577 / RP62A).